Here is a 417-residue protein sequence, read N- to C-terminus: Gamma-glutamyl phosphate reductase (417 aa).

The protein belongs to the gamma-glutamyl phosphate reductase family.

It localises to the cytoplasm. It carries out the reaction L-glutamate 5-semialdehyde + phosphate + NADP(+) = L-glutamyl 5-phosphate + NADPH + H(+). It participates in amino-acid biosynthesis; L-proline biosynthesis; L-glutamate 5-semialdehyde from L-glutamate: step 2/2. Catalyzes the NADPH-dependent reduction of L-glutamate 5-phosphate into L-glutamate 5-semialdehyde and phosphate. The product spontaneously undergoes cyclization to form 1-pyrroline-5-carboxylate. This is Gamma-glutamyl phosphate reductase from Photorhabdus laumondii subsp. laumondii (strain DSM 15139 / CIP 105565 / TT01) (Photorhabdus luminescens subsp. laumondii).